Here is a 445-residue protein sequence, read N- to C-terminus: Argininosuccinate synthase (445 aa).

Residues 17–25 (AFSGGLDTS) and A43 contribute to the ATP site. L-citrulline is bound at residue Y99. 2 residues coordinate ATP: G129 and T131. Residues T131, N135, and D136 each coordinate L-aspartate. Position 135 (N135) interacts with L-citrulline. D136 contributes to the ATP binding site. Residues R139 and S192 each contribute to the L-citrulline site. ATP is bound at residue D194. L-citrulline is bound by residues T201, E203, and E280.

Belongs to the argininosuccinate synthase family. Type 2 subfamily. In terms of assembly, homotetramer.

Its subcellular location is the cytoplasm. The catalysed reaction is L-citrulline + L-aspartate + ATP = 2-(N(omega)-L-arginino)succinate + AMP + diphosphate + H(+). It functions in the pathway amino-acid biosynthesis; L-arginine biosynthesis; L-arginine from L-ornithine and carbamoyl phosphate: step 2/3. The sequence is that of Argininosuccinate synthase from Bordetella bronchiseptica (strain ATCC BAA-588 / NCTC 13252 / RB50) (Alcaligenes bronchisepticus).